The primary structure comprises 318 residues: Aspartate carbamoyltransferase catalytic subunit (318 aa).

Carbamoyl phosphate contacts are provided by Arg-59 and Thr-60. An L-aspartate-binding site is contributed by Lys-87. Carbamoyl phosphate-binding residues include Arg-109, His-137, and Gln-140. L-aspartate-binding residues include Arg-170 and Arg-224. Gly-265 and Pro-266 together coordinate carbamoyl phosphate.

The protein belongs to the aspartate/ornithine carbamoyltransferase superfamily. ATCase family. In terms of assembly, heterododecamer (2C3:3R2) of six catalytic PyrB chains organized as two trimers (C3), and six regulatory PyrI chains organized as three dimers (R2).

The catalysed reaction is carbamoyl phosphate + L-aspartate = N-carbamoyl-L-aspartate + phosphate + H(+). Its pathway is pyrimidine metabolism; UMP biosynthesis via de novo pathway; (S)-dihydroorotate from bicarbonate: step 2/3. Its function is as follows. Catalyzes the condensation of carbamoyl phosphate and aspartate to form carbamoyl aspartate and inorganic phosphate, the committed step in the de novo pyrimidine nucleotide biosynthesis pathway. This Rhizobium johnstonii (strain DSM 114642 / LMG 32736 / 3841) (Rhizobium leguminosarum bv. viciae) protein is Aspartate carbamoyltransferase catalytic subunit.